Consider the following 397-residue polypeptide: Elongation factor Tu (397 aa).

The region spanning 10-206 (KPHVNIGTIG…AVDTSIPQPE (197 aa)) is the tr-type G domain. A G1 region spans residues 19–26 (GHIDHGKT). Residue 19–26 (GHIDHGKT) coordinates GTP. Thr26 is a Mg(2+) binding site. Residues 62-66 (GITIS) are G2. A G3 region spans residues 83–86 (DCPG). Residues 83 to 87 (DCPGH) and 138 to 141 (NKSD) each bind GTP. The tract at residues 138–141 (NKSD) is G4. Positions 176–178 (SAL) are G5.

Belongs to the TRAFAC class translation factor GTPase superfamily. Classic translation factor GTPase family. EF-Tu/EF-1A subfamily. In terms of assembly, monomer.

Its subcellular location is the cytoplasm. It catalyses the reaction GTP + H2O = GDP + phosphate + H(+). In terms of biological role, GTP hydrolase that promotes the GTP-dependent binding of aminoacyl-tRNA to the A-site of ribosomes during protein biosynthesis. The protein is Elongation factor Tu of Salinispora tropica (strain ATCC BAA-916 / DSM 44818 / JCM 13857 / NBRC 105044 / CNB-440).